A 327-amino-acid polypeptide reads, in one-letter code: E3 ubiquitin-protein ligase SINAT4 (327 aa).

A disordered region spans residues 1 to 27 (METDSMECVSSTGNEIHQNGNGHQSYQ). Polar residues predominate over residues 8–27 (CVSSTGNEIHQNGNGHQSYQ). An RING-type zinc finger spans residues 64–100 (CPVCTYSMYPPIHQCHNGHTLCSTCKVRVHNRCPTCR). The SBD stretch occupies residues 114–307 (VAESLELPCK…KELKLRVTGK (194 aa)). The SIAH-type zinc finger occupies 117 to 177 (SLELPCKFYN…LVAHLRDDHK (61 aa)). The Zn(2+) site is built by Cys-122, Cys-129, His-141, Cys-145, Cys-152, Cys-159, His-171, and His-176.

Belongs to the SINA (Seven in absentia) family. In terms of assembly, interacts with SINAT6. Interacts with WAV3. Interacts with FREE1. Interacts with ELC/VPS23A.

The protein resides in the endosome. The protein localises to the multivesicular body. It localises to the cytoplasmic vesicle. Its subcellular location is the autophagosome. The enzyme catalyses S-ubiquitinyl-[E2 ubiquitin-conjugating enzyme]-L-cysteine + [acceptor protein]-L-lysine = [E2 ubiquitin-conjugating enzyme]-L-cysteine + N(6)-ubiquitinyl-[acceptor protein]-L-lysine.. It participates in protein modification; protein ubiquitination. Functionally, E3 ubiquitin-protein ligase that mediates ubiquitination and subsequent proteasomal degradation of target proteins. E3 ubiquitin ligases accept ubiquitin from an E2 ubiquitin-conjugating enzyme in the form of a thioester and then directly transfers the ubiquitin to targeted substrates. It probably triggers the ubiquitin-mediated degradation of different substrates. Modulates directly the ubiquitination and proteasomal-dependent degradation of FREE1, a component of the ESCRT-I complex. Modulates directly the ubiquitination and proteasomal-dependent degradation of ELC/VPS23A, a component of the ESCRT-I complex. The chain is E3 ubiquitin-protein ligase SINAT4 from Arabidopsis thaliana (Mouse-ear cress).